A 931-amino-acid polypeptide reads, in one-letter code: Protein unc-45 homolog B (931 aa).

3 TPR repeats span residues 6 to 39 (AAQL…TKDK), 43 to 76 (ATLY…NSAD), and 77 to 110 (IKAL…EPRN). ARM repeat units lie at residues 169 to 208 (EAGA…GMCS), 211 to 250 (RARA…AIID), and 751 to 790 (DKLR…NMVL).

Interacts with HSP90 in an ATP-independent manner. Interacts with UBE4B; the interaction may target UNC45B for proteasomal degradation. In terms of tissue distribution, highly expressed in adult skeletal muscle and heart. Detected at intermediate levels in lung. Highly expressed in embryonic heart.

The protein localises to the cytoplasm. The protein resides in the myofibril. It is found in the sarcomere. Its subcellular location is the z line. It localises to the a band. The protein localises to the perinuclear region. The protein resides in the cytosol. Acts as a co-chaperone for HSP90 and is required for proper folding of the myosin motor domain. Plays a role in sarcomere formation during muscle cell development. Is necessary for normal early lens development. This Mus musculus (Mouse) protein is Protein unc-45 homolog B (Unc45b).